The following is a 138-amino-acid chain: MTKPIPRIGSRRSGRIGSRKAGRRIPKGVIHVQASFNNTIVTVTDVRGRVVSWSSAGTCGFKGTRRGTPFAAQTAAGNAIRTVVDQGMQRAEVMIKGPGLGRDAALRAIRRSGLLLSFVRDVTPMPHNGCRPPKKRRV.

Residues 1–22 form a disordered region; it reads MTKPIPRIGSRRSGRIGSRKAG. The span at 9–22 shows a compositional bias: basic residues; the sequence is GSRRSGRIGSRKAG.

Belongs to the universal ribosomal protein uS11 family. In terms of assembly, part of the 30S ribosomal subunit.

The protein localises to the plastid. The protein resides in the chloroplast. This Piper cenocladum (Ant piper) protein is Small ribosomal subunit protein uS11c.